The chain runs to 449 residues: Phosphoglucosamine mutase (449 aa).

Ser101 serves as the catalytic Phosphoserine intermediate. Mg(2+) contacts are provided by Ser101, Asp241, Asp243, and Asp245. The residue at position 101 (Ser101) is a Phosphoserine.

The protein belongs to the phosphohexose mutase family. Mg(2+) serves as cofactor. In terms of processing, activated by phosphorylation.

The catalysed reaction is alpha-D-glucosamine 1-phosphate = D-glucosamine 6-phosphate. In terms of biological role, catalyzes the conversion of glucosamine-6-phosphate to glucosamine-1-phosphate. In Alkaliphilus oremlandii (strain OhILAs) (Clostridium oremlandii (strain OhILAs)), this protein is Phosphoglucosamine mutase.